The sequence spans 86 residues: Trypsin inhibitor (86 aa).

Intrachain disulfides connect cysteine 8-cysteine 65 and cysteine 49-cysteine 58.

Functionally, serine protease inhibitor which is active against trypsin. Displays strong antifungal activity against a number of phytopathogenic fungi including M.melonis, A.cucumerina, A.solani, C.glaeosporioides and P.capsici. In Fagopyrum tataricum (Tartarian buckwheat), this protein is Trypsin inhibitor.